The primary structure comprises 318 residues: Energy-coupling factor transporter ATP-binding protein EcfA2 (318 aa).

The 250-residue stretch at 22–271 (LRAQGLKCVF…PEIMQTTSIA (250 aa)) folds into the ABC transporter domain. 59–66 (GNSGSGKS) lines the ATP pocket.

The protein belongs to the ABC transporter superfamily. Energy-coupling factor EcfA family. Forms a stable energy-coupling factor (ECF) transporter complex composed of 2 membrane-embedded substrate-binding proteins (S component), 2 ATP-binding proteins (A component) and 2 transmembrane proteins (T component).

It localises to the cell membrane. In terms of biological role, ATP-binding (A) component of a common energy-coupling factor (ECF) ABC-transporter complex. Unlike classic ABC transporters this ECF transporter provides the energy necessary to transport a number of different substrates. The polypeptide is Energy-coupling factor transporter ATP-binding protein EcfA2 (Mycoplasmoides gallisepticum (strain R(low / passage 15 / clone 2)) (Mycoplasma gallisepticum)).